A 213-amino-acid chain; its full sequence is Kiwellin (213 aa).

Positions M1–S24 are cleaved as a signal peptide. 3 disulfide bridges follow: C28–C60, C32–C44, and C38–C49. A 4-hydroxyproline mark is found at P65 and P67. 4 disulfides stabilise this stretch: C72-C90, C80-C172, C119-C144, and C166-C172. The tract at residues S91–E121 is disordered. Positions P93–F107 are enriched in polar residues.

This sequence belongs to the kiwellin family. Undergoes proteolytic cleavage by actinidin to produce kissper and KiTH. Three forms of KiTH are produced by cleavage at different sites, the main form produced in vivo is KiTH-1.

The protein localises to the secreted. Functionally, pH-dependent, voltage-gated and anion-selective pore-forming peptide. The chain is Kiwellin from Actinidia deliciosa (Kiwi).